The chain runs to 264 residues: Thymidylate synthase (264 aa).

Arg-21 serves as a coordination point for dUMP. (6R)-5,10-methylene-5,6,7,8-tetrahydrofolate is bound at residue His-51. Residue 126-127 (RR) coordinates dUMP. Cys-146 (nucleophile) is an active-site residue. Residues 166–169 (RSCD), Asn-177, and 207–209 (HLY) each bind dUMP. Residue Asp-169 coordinates (6R)-5,10-methylene-5,6,7,8-tetrahydrofolate. Ala-263 is a binding site for (6R)-5,10-methylene-5,6,7,8-tetrahydrofolate.

The protein belongs to the thymidylate synthase family. Bacterial-type ThyA subfamily. In terms of assembly, homodimer.

The protein localises to the cytoplasm. The enzyme catalyses dUMP + (6R)-5,10-methylene-5,6,7,8-tetrahydrofolate = 7,8-dihydrofolate + dTMP. It participates in pyrimidine metabolism; dTTP biosynthesis. In terms of biological role, catalyzes the reductive methylation of 2'-deoxyuridine-5'-monophosphate (dUMP) to 2'-deoxythymidine-5'-monophosphate (dTMP) while utilizing 5,10-methylenetetrahydrofolate (mTHF) as the methyl donor and reductant in the reaction, yielding dihydrofolate (DHF) as a by-product. This enzymatic reaction provides an intracellular de novo source of dTMP, an essential precursor for DNA biosynthesis. This is Thymidylate synthase from Aeromonas salmonicida (strain A449).